Reading from the N-terminus, the 105-residue chain is Large ribosomal subunit protein bL21 (105 aa).

This sequence belongs to the bacterial ribosomal protein bL21 family. In terms of assembly, part of the 50S ribosomal subunit. Contacts protein L20.

Functionally, this protein binds to 23S rRNA in the presence of protein L20. This Blochmanniella pennsylvanica (strain BPEN) protein is Large ribosomal subunit protein bL21.